The chain runs to 283 residues: Elongation factor Ts (283 aa).

The involved in Mg(2+) ion dislocation from EF-Tu stretch occupies residues 80-83 (TDFV).

Belongs to the EF-Ts family.

It is found in the cytoplasm. Associates with the EF-Tu.GDP complex and induces the exchange of GDP to GTP. It remains bound to the aminoacyl-tRNA.EF-Tu.GTP complex up to the GTP hydrolysis stage on the ribosome. The sequence is that of Elongation factor Ts from Enterobacter sp. (strain 638).